Consider the following 389-residue polypeptide: Lipid-A-disaccharide synthase (389 aa).

Belongs to the LpxB family.

It catalyses the reaction a lipid X + a UDP-2-N,3-O-bis[(3R)-3-hydroxyacyl]-alpha-D-glucosamine = a lipid A disaccharide + UDP + H(+). It participates in bacterial outer membrane biogenesis; LPS lipid A biosynthesis. In terms of biological role, condensation of UDP-2,3-diacylglucosamine and 2,3-diacylglucosamine-1-phosphate to form lipid A disaccharide, a precursor of lipid A, a phosphorylated glycolipid that anchors the lipopolysaccharide to the outer membrane of the cell. The chain is Lipid-A-disaccharide synthase from Burkholderia cenocepacia (strain ATCC BAA-245 / DSM 16553 / LMG 16656 / NCTC 13227 / J2315 / CF5610) (Burkholderia cepacia (strain J2315)).